The primary structure comprises 80 residues: Gamma-conotoxin-like Am6.6 (80 aa).

Residues 1 to 19 (MEKLTILLLVAAILMSTQA) form the signal peptide. Positions 20–45 (LNQEQRQQAKINLLSKKKPSAERWRR) are excised as a propeptide. 3 disulfide bridges follow: Cys-47-Cys-61, Cys-54-Cys-65, and Cys-60-Cys-70. A 4-carboxyglutamate mark is found at Glu-56 and Glu-59. Glu-71 is modified (4-carboxyglutamate). The residue at position 76 (Pro-76) is a 4-hydroxyproline. Residues 78 to 80 (RAI) constitute a propeptide that is removed on maturation.

This sequence belongs to the conotoxin O2 family. As to expression, expressed by the venom duct.

It is found in the secreted. Gamma-conotoxins may act on voltage-gated non-specific cation pacemaker channels (HCN). The sequence is that of Gamma-conotoxin-like Am6.6 from Conus amadis (Amadis cone).